Here is a 245-residue protein sequence, read N- to C-terminus: Protein crossbronx (245 aa).

The 158-residue stretch at 20–177 folds into the UBC core domain; that stretch reads HQEYKILAEY…VQESIAESKA (158 aa).

The protein belongs to the ubiquitin-conjugating enzyme family. FTS subfamily.

This is Protein crossbronx (cbx) from Drosophila mojavensis (Fruit fly).